The following is a 130-amino-acid chain: Putative antitoxin VapB50 (130 aa).

Functionally, possibly the antitoxin component of a type II toxin-antitoxin (TA) system. Its cognate toxin is VapC50. This is Putative antitoxin VapB50 from Mycobacterium tuberculosis (strain ATCC 25618 / H37Rv).